Here is a 273-residue protein sequence, read N- to C-terminus: Peroxiredoxin-4 (273 aa).

An N-terminal signal peptide occupies residues 1-40 (METWSKLLDGTTPSRRWRKLVLLLPPLLLFLLQTEALQGL). Residues 81–239 (AKISKPAPYW…TLRLVQAFQY (159 aa)) enclose the Thioredoxin domain. Residue Cys126 is the Cysteine sulfenic acid (-SOH) intermediate of the active site.

This sequence belongs to the peroxiredoxin family. AhpC/Prx1 subfamily. In terms of assembly, homodimer; disulfide-linked, upon oxidation. 5 homodimers assemble to form a ring-like decamer. In terms of processing, the enzyme can be inactivated by further oxidation of the cysteine sulfenic acid (C(P)-SOH) to sulphinic acid (C(P)-SO2H) and sulphonic acid (C(P)-SO3H) instead of its condensation to a disulfide bond.

It is found in the cytoplasm. The protein resides in the endoplasmic reticulum. Its subcellular location is the secreted. It carries out the reaction a hydroperoxide + [thioredoxin]-dithiol = an alcohol + [thioredoxin]-disulfide + H2O. Its function is as follows. Thiol-specific peroxidase that catalyzes the reduction of hydrogen peroxide and organic hydroperoxides to water and alcohols, respectively. Plays a role in cell protection against oxidative stress by detoxifying peroxides and as sensor of hydrogen peroxide-mediated signaling events. Regulates the activation of NF-kappa-B in the cytosol by a modulation of I-kappa-B-alpha phosphorylation. The protein is Peroxiredoxin-4 (Prdx4) of Rattus norvegicus (Rat).